The primary structure comprises 377 residues: tRNA-splicing endonuclease subunit SEN2 (377 aa).

Residues 119-174 (ETEMTLEKVTQQRRLQRLEFKKERAKLERELLELRKKGGHIDEENILLEKQRESLR) are a coiled coil. Catalysis depends on residues tyrosine 289, histidine 297, and lysine 328.

Belongs to the tRNA-intron endonuclease family. Heterotetramer composed of SEN2, SEN15, SEN34 and SEN54. Interacts directly with SEN54.

Its subcellular location is the nucleus. It is found in the endomembrane system. The protein resides in the mitochondrion outer membrane. The catalysed reaction is pretRNA = a 3'-half-tRNA molecule with a 5'-OH end + a 5'-half-tRNA molecule with a 2',3'-cyclic phosphate end + an intron with a 2',3'-cyclic phosphate and a 5'-hydroxyl terminus.. In terms of biological role, constitutes one of the two catalytic subunit of the tRNA-splicing endonuclease complex, a complex responsible for identification and cleavage of the splice sites in pre-tRNA. It cleaves pre-tRNA at the 5'- and 3'-splice sites to release the intron. The products are an intron and two tRNA half-molecules bearing 2',3'-cyclic phosphate and 5'-OH termini. There are no conserved sequences at the splice sites, but the intron is invariably located at the same site in the gene, placing the splice sites an invariant distance from the constant structural features of the tRNA body. This subunit may anchor the endonuclease complex to the nuclear membrane. Probably carries the active site for 5'-splice site cleavage. The sequence is that of tRNA-splicing endonuclease subunit SEN2 (SEN2) from Saccharomyces cerevisiae (strain ATCC 204508 / S288c) (Baker's yeast).